We begin with the raw amino-acid sequence, 498 residues long: L-proline--[L-prolyl-carrier protein] ligase (498 aa).

Belongs to the ATP-dependent AMP-binding enzyme family.

The enzyme catalyses holo-[peptidyl-carrier protein] + L-proline + ATP = L-prolyl-[peptidyl-carrier protein] + AMP + diphosphate. Involved in the biosynthesis of pyoluteorin. Catalyzes the conversion of L-proline to L-prolyl-AMP and the transfer of the L-prolyl group to acyl carrier protein PltL. This Pseudomonas fluorescens (strain ATCC BAA-477 / NRRL B-23932 / Pf-5) protein is L-proline--[L-prolyl-carrier protein] ligase.